A 242-amino-acid polypeptide reads, in one-letter code: MMVNDDFQEYVKQLVTKHRDERIYPFQYEGKKYWLKQPEKLKGIWLLLKPHPKKSFKNELYTLLKLAEQNAPVPKVSYYSDHFFVLENVGLTVSQWLCNKNIDEQQKFLIIYDACLALIDLHAKNLVHGRPAIRDITWDKGKVTFLDFESRSNSRNQNWVVIRDMLFFFDSLCREEDISDTFIQKVALYYQTHCEAKNWQNMIVFLQRFSWVYYLLLPFKPIAKTDLISIYRLFEIFLIKKK.

This is an uncharacterized protein from Haemophilus influenzae (strain ATCC 51907 / DSM 11121 / KW20 / Rd).